The following is a 313-amino-acid chain: Malate dehydrogenase (313 aa).

Residues 8–13 (GAGNVG) and Asp33 contribute to the NAD(+) site. Residues Arg83 and Arg89 each coordinate substrate. NAD(+) is bound by residues Asn96 and 119–121 (ISN). Residues Asn121 and Arg152 each contribute to the substrate site. His176 functions as the Proton acceptor in the catalytic mechanism.

It belongs to the LDH/MDH superfamily. MDH type 3 family.

The catalysed reaction is (S)-malate + NAD(+) = oxaloacetate + NADH + H(+). Functionally, catalyzes the reversible oxidation of malate to oxaloacetate. The polypeptide is Malate dehydrogenase (Bacteroides thetaiotaomicron (strain ATCC 29148 / DSM 2079 / JCM 5827 / CCUG 10774 / NCTC 10582 / VPI-5482 / E50)).